Here is a 160-residue protein sequence, read N- to C-terminus: Succinate dehydrogenase assembly factor 2-A, mitochondrial (160 aa).

The N-terminal 30 residues, 1–30 (MLRQLKLTLNISRWIFMPWQRQASASSSQV), are a transit peptide targeting the mitochondrion.

It belongs to the SDHAF2 family. As to quaternary structure, interacts with the flavoprotein subunit within the SDH catalytic dimer.

The protein localises to the mitochondrion matrix. Plays an essential role in the assembly of succinate dehydrogenase (SDH), an enzyme complex (also referred to as respiratory complex II) that is a component of both the tricarboxylic acid (TCA) cycle and the mitochondrial electron transport chain, and which couples the oxidation of succinate to fumarate with the reduction of ubiquinone (coenzyme Q) to ubiquinol. Required for flavinylation (covalent attachment of FAD) of the flavoprotein subunit of the SDH catalytic dimer. The protein is Succinate dehydrogenase assembly factor 2-A, mitochondrial of Drosophila persimilis (Fruit fly).